Here is a 122-residue protein sequence, read N- to C-terminus: Large ribosomal subunit protein uL14 (122 aa).

This sequence belongs to the universal ribosomal protein uL14 family. In terms of assembly, part of the 50S ribosomal subunit. Forms a cluster with proteins L3 and L19. In the 70S ribosome, L14 and L19 interact and together make contacts with the 16S rRNA in bridges B5 and B8.

Functionally, binds to 23S rRNA. Forms part of two intersubunit bridges in the 70S ribosome. The protein is Large ribosomal subunit protein uL14 of Mycobacterium sp. (strain KMS).